The chain runs to 207 residues: Outer-membrane lipoprotein LolB (207 aa).

Residues 1-21 (MPLPDFRFIRLLPLAALVLTA) form the signal peptide. Residue Cys-22 is the site of N-palmitoyl cysteine attachment. Cys-22 carries S-diacylglycerol cysteine lipidation.

It belongs to the LolB family. In terms of assembly, monomer.

Its subcellular location is the cell outer membrane. Its function is as follows. Plays a critical role in the incorporation of lipoproteins in the outer membrane after they are released by the LolA protein. The polypeptide is Outer-membrane lipoprotein LolB (Escherichia coli O6:H1 (strain CFT073 / ATCC 700928 / UPEC)).